Reading from the N-terminus, the 181-residue chain is Achaete-scute homolog 3 (181 aa).

Residues 93–106 (AFTRKRNERERQRV) form a basic motif region. The bHLH domain occupies 93–145 (AFTRKRNERERQRVKCVNEGYAQLRHHLPEEYLEKRLSKVETLRAAIKYINYL). Residues 107–145 (KCVNEGYAQLRHHLPEEYLEKRLSKVETLRAAIKYINYL) are helix-loop-helix motif.

As to quaternary structure, efficient DNA binding requires dimerization with another bHLH protein. In terms of tissue distribution, widely expressed in fetal and adult tissues.

The protein resides in the nucleus. Its function is as follows. Transcriptional repressor. Inhibits myogenesis. Plays a role in progenitor cells which differentiate into ductal and acinar, but not myoepithelial, cell lineages in the salivary glands. Involved in the functions of the microvillar cells and Bowman's glands and probably, in a non-cell-autonomous manner, in the development or regeneration of a complete olfactory epithelium (OE). This is Achaete-scute homolog 3 from Homo sapiens (Human).